The chain runs to 476 residues: MTSTEEKTTSGRVVRITGPVVDVEFPRGSVPELFNALHADITYKELSKTLTLEVAQHLGDNLVRTISMQPTDGLVRGVEVTDTGNSISVPVGDGVKGHVFNALGDCLDEPGYGKDFEHWSIHRKPPPFSELEPRTEMLETGLKVVDLLTPYVRGGKIALFGGAGVGKTVLIQEMINRIARNFGGTSVFAGVGERTREGNDLWVELEDANVLKDTALVFGQMDEPPGTRMRVALSALTMAEFFRDEQQQDVLLFIDNIFRFTQAGSEVSTLLGRMPSAVGYQPTLADEMGELQERITSTRGRSITSMQAVYVPADDYTDPAPATTFAHLDATTELSRTVFSKGIFPAVDPLASSSTILDPAVVGDEHYRVAQEVIRILQRYKDLQDIIAILGIDELAEEDKQLVQRARRLERFLSQNMMAAEQFTGQPGSTVPLKETIEAFDKLTKGEFDHLPEQAFFLIGGLDDLAKKAESLGAKL.

An ATP-binding site is contributed by 161–168 (GGAGVGKT).

Belongs to the ATPase alpha/beta chains family. In terms of assembly, F-type ATPases have 2 components, CF(1) - the catalytic core - and CF(0) - the membrane proton channel. CF(1) has five subunits: alpha(3), beta(3), gamma(1), delta(1), epsilon(1). CF(0) has three main subunits: a(1), b(2) and c(9-12). The alpha and beta chains form an alternating ring which encloses part of the gamma chain. CF(1) is attached to CF(0) by a central stalk formed by the gamma and epsilon chains, while a peripheral stalk is formed by the delta and b chains.

It localises to the cell membrane. It catalyses the reaction ATP + H2O + 4 H(+)(in) = ADP + phosphate + 5 H(+)(out). Functionally, produces ATP from ADP in the presence of a proton gradient across the membrane. The catalytic sites are hosted primarily by the beta subunits. The protein is ATP synthase subunit beta of Mycolicibacterium gilvum (strain PYR-GCK) (Mycobacterium gilvum (strain PYR-GCK)).